The following is a 498-amino-acid chain: Cytochrome P450 monooxygenase 110 (498 aa).

A helical membrane pass occupies residues 7–24 (YVFALLGILATLYFVRWS). Asn-425 is a glycosylation site (N-linked (GlcNAc...) asparagine). Cys-440 lines the heme pocket.

The protein belongs to the cytochrome P450 family. It depends on heme as a cofactor.

The protein resides in the membrane. It participates in secondary metabolite biosynthesis. In terms of biological role, cytochrome P450 monooxygenase that is able to use dehydroabietic acid and testosterone as substrates for oxidation, suggesting that the natural substrate(s) may be structurally related to steroid compounds. The chain is Cytochrome P450 monooxygenase 110 from Postia placenta (strain ATCC 44394 / Madison 698-R) (Brown rot fungus).